Here is a 263-residue protein sequence, read N- to C-terminus: uncharacterized protein (263 aa).

The N-terminal stretch at 1–22 is a signal peptide; that stretch reads MEYLKRLALLISVIILTIFIMG. A lipid anchor (N-palmitoyl cysteine) is attached at C23. A lipid anchor (S-diacylglycerol cysteine) is attached at C23.

This sequence belongs to the staphylococcal tandem lipoprotein family.

Its subcellular location is the cell membrane. This is an uncharacterized protein from Staphylococcus aureus (strain USA300).